The following is a 110-amino-acid chain: MNIQALMQQAQAMQKQVEANVEKAKKELADKEVQAEAGNGLVKVTMTGRHVVKRLSIDPSLLEDEPDLIEDLIAAAINAAVTKADELSETTLAKATSGMGLPPGMQGLFG.

This sequence belongs to the YbaB/EbfC family. As to quaternary structure, homodimer.

It is found in the cytoplasm. The protein resides in the nucleoid. In terms of biological role, binds to DNA and alters its conformation. May be involved in regulation of gene expression, nucleoid organization and DNA protection. This Psychrobacter sp. (strain PRwf-1) protein is Nucleoid-associated protein PsycPRwf_1729.